The sequence spans 74 residues: Acyl carrier protein (74 aa).

The region spanning 1 to 73 (MAVFEKVQEI…DLVAYVEEKS (73 aa)) is the Carrier domain. Ser-35 is modified (O-(pantetheine 4'-phosphoryl)serine).

This sequence belongs to the acyl carrier protein (ACP) family. 4'-phosphopantetheine is transferred from CoA to a specific serine of apo-ACP by AcpS. This modification is essential for activity because fatty acids are bound in thioester linkage to the sulfhydryl of the prosthetic group.

The protein resides in the cytoplasm. Its pathway is lipid metabolism; fatty acid biosynthesis. In terms of biological role, carrier of the growing fatty acid chain in fatty acid biosynthesis. The sequence is that of Acyl carrier protein from Streptococcus pyogenes serotype M1.